An 802-amino-acid polypeptide reads, in one-letter code: Phenylalanine--tRNA ligase beta subunit (802 aa).

In terms of domain architecture, tRNA-binding spans 38–148; it reads SKNFERVIVG…SEVPVGTDIS (111 aa). Positions 403-478 constitute a B5 domain; the sequence is VIQKKIFVLK…RVFGYHNIPA (76 aa). 3 residues coordinate Mg(2+): Asp456, Asp462, and Asp466. The region spanning 703–796 is the FDX-ACB domain; it reads SLYPRCSRDI…LQEKFNAILR (94 aa).

Belongs to the phenylalanyl-tRNA synthetase beta subunit family. Type 1 subfamily. As to quaternary structure, tetramer of two alpha and two beta subunits. Mg(2+) is required as a cofactor.

The protein resides in the cytoplasm. The catalysed reaction is tRNA(Phe) + L-phenylalanine + ATP = L-phenylalanyl-tRNA(Phe) + AMP + diphosphate + H(+). This Buchnera aphidicola subsp. Baizongia pistaciae (strain Bp) protein is Phenylalanine--tRNA ligase beta subunit.